The sequence spans 119 residues: ATP-dependent Clp protease adapter protein ClpS (119 aa).

The disordered stretch occupies residues 1–29 (MICPPGENKSMAERKQGGQGNGVGSSVVT).

The protein belongs to the ClpS family. As to quaternary structure, binds to the N-terminal domain of the chaperone ClpA.

Its function is as follows. Involved in the modulation of the specificity of the ClpAP-mediated ATP-dependent protein degradation. The chain is ATP-dependent Clp protease adapter protein ClpS from Caulobacter vibrioides (strain ATCC 19089 / CIP 103742 / CB 15) (Caulobacter crescentus).